The primary structure comprises 85 residues: Neurotoxin beta-KTx 14.3 (85 aa).

The signal sequence occupies residues 1–20 (MKQYIFFLALIVLTATFAEA). Residues 21–37 (GKKTEILDKVKKVFSKG) constitute a propeptide that is removed on maturation. A BetaSPN-type CS-alpha/beta domain is found at 49 to 85 (ELGCPFIEKWCEDHCESKKQVGKCENFDCSCVKLGGK). Cystine bridges form between Cys52/Cys72, Cys59/Cys77, and Cys63/Cys79.

It belongs to the long chain scorpion toxin family. Class 2 subfamily. Expressed by the venom gland.

The protein localises to the secreted. Functionally, toxin with activity on voltage-gated potassium channels. Moderately and reversibly blocks up to 50% of the activity of Kv7.1/KCNQ1 (tested at 22 uM). 3D-structure modeling of the KCNQ1-toxin complex shows that the toxin interacts with the channel pore domain. Additionally, shows a very weak effect to block voltage-gated potassium channel Kv1.1/KCNA1. In terms of biological role, has a very weak effect to block voltage-gated potassium channel Kv1.1/KCNA1. The chain is Neurotoxin beta-KTx 14.3 from Lychas mucronatus (Chinese swimming scorpion).